Consider the following 354-residue polypeptide: Histidinol-phosphate aminotransferase (354 aa).

The residue at position 208 (K208) is an N6-(pyridoxal phosphate)lysine.

This sequence belongs to the class-II pyridoxal-phosphate-dependent aminotransferase family. Histidinol-phosphate aminotransferase subfamily. Homodimer. Pyridoxal 5'-phosphate is required as a cofactor.

The enzyme catalyses L-histidinol phosphate + 2-oxoglutarate = 3-(imidazol-4-yl)-2-oxopropyl phosphate + L-glutamate. It participates in amino-acid biosynthesis; L-histidine biosynthesis; L-histidine from 5-phospho-alpha-D-ribose 1-diphosphate: step 7/9. In Aquifex aeolicus (strain VF5), this protein is Histidinol-phosphate aminotransferase.